We begin with the raw amino-acid sequence, 90 residues long: DNA-directed RNA polymerase subunit omega (90 aa).

Residues 69–90 (RQEQQEQEAAELAAVSSIAHTR) are disordered.

It belongs to the RNA polymerase subunit omega family. In terms of assembly, the RNAP catalytic core consists of 2 alpha, 1 beta, 1 beta' and 1 omega subunit. When a sigma factor is associated with the core the holoenzyme is formed, which can initiate transcription.

It carries out the reaction RNA(n) + a ribonucleoside 5'-triphosphate = RNA(n+1) + diphosphate. Promotes RNA polymerase assembly. Latches the N- and C-terminal regions of the beta' subunit thereby facilitating its interaction with the beta and alpha subunits. The sequence is that of DNA-directed RNA polymerase subunit omega from Vibrio atlanticus (strain LGP32) (Vibrio splendidus (strain Mel32)).